A 145-amino-acid polypeptide reads, in one-letter code: GISADQAKALKDDIAVVAQNPNGCGKALFIKMFEMNPGWVEKFPAWKGKSLDEIKASDKITNHGGKVINELANWINNINSASGILKSQGTAHKGRSIGIEYFENVLPVIDATFAQQMGGAYTAAMKDALKAAWTGVIVPGMKAGY.

A Globin domain is found at 1–145 (GISADQAKAL…VIVPGMKAGY (145 aa)). H63 and H92 together coordinate heme b.

It belongs to the globin family. As to quaternary structure, monomer.

The sequence is that of Globin-1 from Liolophura japonica (Chiton).